The following is a 630-amino-acid chain: Zinc finger protein 37 homolog (630 aa).

3 disordered regions span residues 1-45 (MSVS…SAAE), 77-172 (KPDM…PSKK), and 193-285 (HSRN…KHEK). The span at 14–30 (ETVDRRRSAETTKEAGR) shows a compositional bias: basic and acidic residues. In terms of domain architecture, KRAB spans 32–103 (LEMAVSEPEA…KGKRPSQGCP (72 aa)). Serine 42 is subject to Phosphoserine. Over residues 110-122 (KQKETDGKVQKDD) the composition is skewed to basic and acidic residues. The span at 161–172 (NNLHKKHVPSKK) shows a compositional bias: basic residues. The segment covering 193 to 206 (HSRNCVKRKSDAAK) has biased composition (basic and acidic residues). The segment covering 221-231 (KGKKQTGKKHE) has biased composition (basic residues). 2 stretches are compositionally biased toward basic and acidic residues: residues 232–243 (KLSSHSSSDKCN) and 260–274 (IKQDKIQTGEKHEKS). 2 consecutive C2H2-type zinc fingers follow at residues 293–315 (YECNQCGKVLSHKQGLIDHQRVH) and 321–343 (YECNECGIAFSQKSHLVVHQRTH). The C2H2-type 3; atypical zinc finger occupies 349-367 (YECIQCGKAHGHKHALTDH). 9 consecutive C2H2-type zinc fingers follow at residues 377–399 (YECAECGKTFRHSSNLIQHVRSH), 405–427 (YECKECGKSFRYNSSLTEHVRTH), 433–455 (YECNECGKAFKYSSSLTKHMRIH), 461–483 (FECNECGKAFSKKSHLIIHQRTH), 489–511 (YKCNECGKAFGHSSSLTYHMRTH), 517–539 (FECNQCGKGFKQIEGLTQHQRVH), 545–567 (YECNECGKAFSQKSHLIVHQRTH), 573–595 (YECNECEKAFNAKSQLVIHQRSH), and 601–623 (YECNECGKTFKQNASLTKHVKTH).

This sequence belongs to the krueppel C2H2-type zinc-finger protein family. As to expression, expressed at low level in several tissues including fetal cartilage.

The protein resides in the nucleus. Functionally, may be involved in transcriptional regulation. The polypeptide is Zinc finger protein 37 homolog (ZFP37) (Homo sapiens (Human)).